We begin with the raw amino-acid sequence, 369 residues long: Putative gustatory receptor 39b (369 aa).

Topologically, residues 1–32 (MLYSFHPYLKYFALLGLVPWSESCAQSKFVQK) are cytoplasmic. Residues 33 to 53 (VYSAILIILNAVHFGISIYFP) traverse the membrane as a helical segment. Residues 54–59 (QSAELF) lie on the Extracellular side of the membrane. Residues 60-80 (LSLMVNVIVFVARIVCVTVII) form a helical membrane-spanning segment. At 81–122 (LQVMVHYDDYFRFCREMKYLGLRLQCELKIHVGRLKWQSYAK) the chain is on the cytoplasmic side. The chain crosses the membrane as a helical span at residues 123–143 (ILALGIGFLVTVLPSIYVALS). At 144 to 147 (GSLL) the chain is on the extracellular side. A helical transmembrane segment spans residues 148-168 (YFWSSLLSILIIRMQFVLVLL). Topologically, residues 169–224 (NVELLGHHVSLLGIRLQNVLECHLMGANCTLDGNANRLCSLEFLLALKQSHMQLHY) are cytoplasmic. A helical transmembrane segment spans residues 225–245 (LFTHFNDLFGWSILGTYVVLF). Residues 246-265 (SDSTVNIYWTQQVLVEVYEY) lie on the Extracellular side of the membrane. Residues 266–286 (KYLYATFSVFVPSFFNILVFC) traverse the membrane as a helical segment. Residues 287-348 (RCGEFCQRQS…EGFMSTDNSL (62 aa)) are Cytoplasmic-facing. Residues 349–368 (LMSILAAKVTYLIVLMQFSS) form a helical membrane-spanning segment. Residue V369 is a topological domain, extracellular.

It belongs to the insect chemoreceptor superfamily. Gustatory receptor (GR) family. Gr2a subfamily. As to expression, expressed in the adult labellar chemosensory neurons and in abdominal ganglions. In larvae, is expressed in neurons of the dorsal and posterior pharyngeal sense organs.

The protein localises to the cell membrane. Its function is as follows. Probable gustatory receptor which mediates acceptance or avoidance behavior, depending on its substrates. Has also atypical sensory function in organ not limited to conventional taste sensing like abdominal ganglions. In Drosophila melanogaster (Fruit fly), this protein is Putative gustatory receptor 39b (Gr39b).